The chain runs to 520 residues: Acetyltransferase MAT1 (520 aa).

Residues histidine 183 and aspartate 456 each act as proton acceptor in the active site.

This sequence belongs to the plant acyltransferase family.

It functions in the pathway secondary metabolite biosynthesis. In terms of biological role, acyl-CoA-dependent acyltransferase; part of the gene cluster that mediates the biosynthesis of mannosylerythritol lipids (MELs), surface-active substances that enhance the availability of water-insoluble substrates. Depending on the number of acetyl groups, mannosylerythritol lipids can be differentiated into MEL A (fully acetylated), MEL B and MEL C (monoacetylated at R-6 and R-4, respectively), and the fully deacetylated MEL D. The first step in the pathway is the generation of mannosylerythritol by the glycosyltransferase EMT1 which catalyzes the transfer of GDP-mannose to the C-4 atom of meso-erythritol. This reaction has to be stereospecific, since only mannosyl-D-erythritol is generated. The produced disaccharide is subsequently acylated with fatty acids of various lengths by the acyltransferases MAC1 and MAC2 at positions C-2 and C-3, repectively. The existence of MEL derivatives which carry an acetyl group at C-2 implies that at least MAC1 also accepts acetyl-CoA as a donor. The final step of MEL biosynthesis is the acetylation of the fully acylated mannosylerythritol lipids catalyzed by the acetyl-CoA-dependent acetyltransferase MAT1. MAT1 displays a relaxed regioselectivity and is able to transfer acetylgroups to both positions C-4 and C-6 of the mannosyl moiety. This is Acetyltransferase MAT1 from Pseudozyma antarctica (strain T-34) (Yeast).